The chain runs to 380 residues: Chaperone protein DnaJ (380 aa).

One can recognise a J domain in the interval 5–70 (DYYEVLGLQK…EKRAAYDQYG (66 aa)). The CR-type zinc-finger motif lies at 136-214 (GCKKDIRIST…CHGDGRVQKA (79 aa)). Zn(2+) contacts are provided by Cys-149, Cys-152, Cys-166, Cys-169, Cys-188, Cys-191, Cys-202, and Cys-205. CXXCXGXG motif repeat units lie at residues 149–156 (CDTCHGSG), 166–173 (CSHCHGSG), 188–195 (CPSCHGSG), and 202–209 (CKSCHGDG).

It belongs to the DnaJ family. In terms of assembly, homodimer. Requires Zn(2+) as cofactor.

The protein localises to the cytoplasm. Its function is as follows. Participates actively in the response to hyperosmotic and heat shock by preventing the aggregation of stress-denatured proteins and by disaggregating proteins, also in an autonomous, DnaK-independent fashion. Unfolded proteins bind initially to DnaJ; upon interaction with the DnaJ-bound protein, DnaK hydrolyzes its bound ATP, resulting in the formation of a stable complex. GrpE releases ADP from DnaK; ATP binding to DnaK triggers the release of the substrate protein, thus completing the reaction cycle. Several rounds of ATP-dependent interactions between DnaJ, DnaK and GrpE are required for fully efficient folding. Also involved, together with DnaK and GrpE, in the DNA replication of plasmids through activation of initiation proteins. The protein is Chaperone protein DnaJ of Actinobacillus pleuropneumoniae serotype 5b (strain L20).